The chain runs to 311 residues: Transcriptional regulatory protein MoaR1 (311 aa).

Residues 15–117 (LNATTAGAVQ…SEPPGYRLLI (103 aa)) constitute a DNA-binding region (ompR/PhoB-type).

This sequence belongs to the AfsR/DnrI/RedD regulatory family.

Acts as a positive transcriptional regulator of the molybdopterin biosynthesis moa1 locus, promoting the expression of the moaA1B1C1D1 genes. This chain is Transcriptional regulatory protein MoaR1 (moaR1), found in Mycobacterium bovis (strain BCG / Pasteur 1173P2).